Reading from the N-terminus, the 415-residue chain is Serine hydroxymethyltransferase (415 aa).

(6S)-5,6,7,8-tetrahydrofolate-binding positions include leucine 117 and 121-123 (GHL). Position 226 is an N6-(pyridoxal phosphate)lysine (lysine 226).

Belongs to the SHMT family. As to quaternary structure, homodimer. It depends on pyridoxal 5'-phosphate as a cofactor.

The protein localises to the cytoplasm. It carries out the reaction (6R)-5,10-methylene-5,6,7,8-tetrahydrofolate + glycine + H2O = (6S)-5,6,7,8-tetrahydrofolate + L-serine. The protein operates within one-carbon metabolism; tetrahydrofolate interconversion. It functions in the pathway amino-acid biosynthesis; glycine biosynthesis; glycine from L-serine: step 1/1. Functionally, catalyzes the reversible interconversion of serine and glycine with tetrahydrofolate (THF) serving as the one-carbon carrier. This reaction serves as the major source of one-carbon groups required for the biosynthesis of purines, thymidylate, methionine, and other important biomolecules. Also exhibits THF-independent aldolase activity toward beta-hydroxyamino acids, producing glycine and aldehydes, via a retro-aldol mechanism. This Leptospira borgpetersenii serovar Hardjo-bovis (strain JB197) protein is Serine hydroxymethyltransferase.